A 242-amino-acid polypeptide reads, in one-letter code: Coiled-coil domain-containing protein 107 (242 aa).

An N-terminal signal peptide occupies residues 1-24 (MEGAGPVLSILGLLLVSAPFGVLG). Positions 27–62 (PSADLGAHPERGSQVSPGTTEPRRQPPPKDQRERAR) are disordered. Positions 47–62 (EPRRQPPPKDQRERAR) are enriched in basic and acidic residues. The helical transmembrane segment at 65-85 (SLSLGALYTAAVVAFVLFKCL) threads the bilayer. The stretch at 97–132 (EKNKKKSSQSEQQLVQLTQQLAQTEQHLNHLMTQLD) forms a coiled coil. Positions 186-210 (KEDQEAGNSQAWEEPITWSPETRNL) are disordered.

The protein localises to the membrane. This Mus musculus (Mouse) protein is Coiled-coil domain-containing protein 107 (Ccdc107).